A 581-amino-acid chain; its full sequence is MAGVSDAAAPGSGGEGRRGGGGSPEQLQQDGCRGEPKTLWGSSELRPPPAGPGQPSPHQRTETLGFYESDRGRKKKRGLSDLSLLRFISAELTRGYFLEHNEAKYTERRERVYTCMRIPKELEKLMFFGIFLCLDAFLYIFTLLPLRVFLAMFRFITLPCYGLRDRRLLQPAQVCDILKGVILVICYFMMHYVDYSMMYHLIRGQSVIKLYIIYNMLEVADRLFSSFGQDILDALYWTATEPKERKRAHIGVIPHFFMAVLYVFLHAILIMVQATTLNVAFNSHNKSLLTIMMSNNFVEIKGSVFKKFEKNNLFQMSNSDIKERFTNYVLLLIVCLRNMEQFSWNPDHLWVLFPDVCMVVASEIAVDIVKHAFITKFNDITADVYSEYRASLAFDLVSSRQKNAYTDYSDSVSRRMGFIPLPLAVLLMRVVTSSIKVQGVLAYVCVVLFYCGLISLKVLNSIVLLGKSCQYVKEAKMEEKLFNPVPSASAGKPAGKPQSMFKSTHGFSTDENGSTSVTNQPVHQKDSPPSLLVTSNSDQFLTTPDGEEKDISQDSSELKHRSSKKDLLEIDRFTICGNRID.

The disordered stretch occupies residues 1–72 (MAGVSDAAAP…TLGFYESDRG (72 aa)). Gly residues predominate over residues 11-23 (GSGGEGRRGGGGS). A compositionally biased stretch (pro residues) spans 46–55 (RPPPAGPGQP). A run of 5 helical transmembrane segments spans residues 125-145 (LMFF…TLLP), 182-202 (ILVI…YHLI), 250-270 (IGVI…AILI), 417-437 (GFIP…SIKV), and 439-459 (GVLA…LKVL). Residues 484-563 (PVPSASAGKP…DSSELKHRSS (80 aa)) are disordered. 2 stretches are compositionally biased toward polar residues: residues 500-522 (MFKS…NQPV) and 532-542 (LVTSNSDQFLT). Over residues 549–563 (KDISQDSSELKHRSS) the composition is skewed to basic and acidic residues.

This sequence belongs to the TAPT1 family.

It is found in the cytoplasm. Its subcellular location is the cytoskeleton. The protein resides in the microtubule organizing center. It localises to the centrosome. The protein localises to the cilium basal body. It is found in the membrane. Functionally, plays a role in primary cilia formation. May act as a downstream effector of HOXC8 during development. May be involved in cartilage and bone development. May play a role in the differentiation of cranial neural crest cells. The protein is Transmembrane anterior posterior transformation protein 1 homolog (TAPT1) of Gallus gallus (Chicken).